A 454-amino-acid chain; its full sequence is Probable succinate-semialdehyde dehydrogenase [NADP(+)] (454 aa).

NADP(+) is bound by residues 130-131 (WN), 154-157 (KHAS), and 206-207 (GS). Glutamate 228 functions as the Proton acceptor in the catalytic mechanism. An NADP(+)-binding site is contributed by leucine 229. The active-site Nucleophile is the cysteine 262. Glutamate 359 contacts NADP(+).

This sequence belongs to the aldehyde dehydrogenase family.

It catalyses the reaction succinate semialdehyde + NADP(+) + H2O = succinate + NADPH + 2 H(+). It functions in the pathway amino-acid degradation; 4-aminobutanoate degradation. Its function is as follows. Catalyzes the NADP(+) dependent oxidation of succinate semialdehyde to succinate. The sequence is that of Probable succinate-semialdehyde dehydrogenase [NADP(+)] (gabD) from Synechocystis sp. (strain ATCC 27184 / PCC 6803 / Kazusa).